A 294-amino-acid chain; its full sequence is tRNA dimethylallyltransferase (294 aa).

11-18 (GPTAVGKT) lines the ATP pocket. 13 to 18 (TAVGKT) contributes to the substrate binding site. The tract at residues 36–39 (DSQQ) is interaction with substrate tRNA.

It belongs to the IPP transferase family. Monomer. Mg(2+) serves as cofactor.

The catalysed reaction is adenosine(37) in tRNA + dimethylallyl diphosphate = N(6)-dimethylallyladenosine(37) in tRNA + diphosphate. Catalyzes the transfer of a dimethylallyl group onto the adenine at position 37 in tRNAs that read codons beginning with uridine, leading to the formation of N6-(dimethylallyl)adenosine (i(6)A). The chain is tRNA dimethylallyltransferase from Lactococcus lactis subsp. lactis (strain IL1403) (Streptococcus lactis).